The sequence spans 421 residues: Synaptotagmin-1 (421 aa).

A disordered region spans residues 1–40; that stretch reads MVSESHHEALAAPPATTVAAAPPSNVTEPASPGGGGGKED. Residues 1–60 are Vesicular-facing; sequence MVSESHHEALAAPPATTVAAAPPSNVTEPASPGGGGGKEDAFSKLKEKFMNELNKIPLPP. Over residues 10 to 23 the composition is skewed to low complexity; the sequence is LAAPPATTVAAAPP. The N-linked (GlcNAc...) asparagine glycan is linked to Asn25. The helical transmembrane segment at 61-81 threads the bilayer; the sequence is WALIAIAIVAVLLILTCCFCL. 5 S-palmitoyl cysteine lipidation sites follow: Cys77, Cys78, Cys80, Cys82, and Cys85. The Cytoplasmic segment spans residues 82 to 421; that stretch reads CKKCLFKKKN…EVDAMLAVKK (340 aa). A disordered region spans residues 94–139; that stretch reads KGKEKGGKNAINMKDVKDLGKTMKDQDDDAETGLTDGEEKEEPKEV. Positions 107-118 are enriched in basic and acidic residues; that stretch reads KDVKDLGKTMKD. The segment covering 119–133 has biased composition (acidic residues); it reads QDDDAETGLTDGEEK. A phospholipid binding region spans residues 135–381; that stretch reads EPKEVEKLGK…AIGKVFVGYN (247 aa). C2 domains follow at residues 141–260 and 272–405; these read KLGK…EEWR and KLGD…AQWH. Ca(2+)-binding residues include Leu171, Asp172, Asp178, Asp230, Phe231, Asp232, Ser235, Lys236, Asp238, Asp303, Asp309, Asp363, Asp365, and Asp371.

It belongs to the synaptotagmin family. In terms of assembly, homotetramer. It depends on Ca(2+) as a cofactor.

The protein resides in the cytoplasmic vesicle. It is found in the secretory vesicle membrane. Its subcellular location is the secretory vesicle. It localises to the synaptic vesicle membrane. The protein localises to the chromaffin granule membrane. The protein resides in the cytoplasm. Functionally, calcium sensor that participates in triggering neurotransmitter release at the synapse. May have a regulatory role in the membrane interactions during trafficking of synaptic vesicles at the active zone of the synapse. It binds acidic phospholipids with a specificity that requires the presence of both an acidic head group and a diacyl backbone. May play a role in dendrite formation by melanocytes. May play a role in regulating the secretion of hormones relevant to the reproduction and egg-laying of female geese. In Anser cygnoides (Swan goose), this protein is Synaptotagmin-1.